The primary structure comprises 88 residues: Cytochrome c oxidase subunit 6B2 (88 aa).

Positions 29–75 constitute a CHCH domain; it reads TRNCYQNFLDYHRCIKTMNRRGKSTQPCEYYFRVYHSLCPISWVQRW. The short motif at 32 to 42 is the Cx9C motif element; that stretch reads CYQNFLDYHRC. 2 disulfide bridges follow: C32–C67 and C42–C56. The Cx10C motif signature appears at 56 to 67; it reads CEYYFRVYHSLC.

The protein belongs to the cytochrome c oxidase subunit 6B family. As to quaternary structure, component of the cytochrome c oxidase (complex IV, CIV), a multisubunit enzyme composed of 14 subunits. The complex is composed of a catalytic core of 3 subunits MT-CO1, MT-CO2 and MT-CO3, encoded in the mitochondrial DNA, and 11 supernumerary subunits COX4I1 (or COX4I2), COX5A, COX5B, COX6A2 (or COX6A1), COX6B1 (or COX6B2), COX6C, COX7A1 (or COX7A2), COX7B, COX7C, COX8B and NDUFA4, which are encoded in the nuclear genome. The complex exists as a monomer or a dimer and forms supercomplexes (SCs) in the inner mitochondrial membrane with NADH-ubiquinone oxidoreductase (complex I, CI) and ubiquinol-cytochrome c oxidoreductase (cytochrome b-c1 complex, complex III, CIII), resulting in different assemblies (supercomplex SCI(1)III(2)IV(1) and megacomplex MCI(2)III(2)IV(2)). Testis specific.

The protein localises to the mitochondrion inner membrane. It participates in energy metabolism; oxidative phosphorylation. Component of the cytochrome c oxidase, the last enzyme in the mitochondrial electron transport chain which drives oxidative phosphorylation. The respiratory chain contains 3 multisubunit complexes succinate dehydrogenase (complex II, CII), ubiquinol-cytochrome c oxidoreductase (cytochrome b-c1 complex, complex III, CIII) and cytochrome c oxidase (complex IV, CIV), that cooperate to transfer electrons derived from NADH and succinate to molecular oxygen, creating an electrochemical gradient over the inner membrane that drives transmembrane transport and the ATP synthase. Cytochrome c oxidase is the component of the respiratory chain that catalyzes the reduction of oxygen to water. Electrons originating from reduced cytochrome c in the intermembrane space (IMS) are transferred via the dinuclear copper A center (CU(A)) of subunit 2 and heme A of subunit 1 to the active site in subunit 1, a binuclear center (BNC) formed by heme A3 and copper B (CU(B)). The BNC reduces molecular oxygen to 2 water molecules using 4 electrons from cytochrome c in the IMS and 4 protons from the mitochondrial matrix. The polypeptide is Cytochrome c oxidase subunit 6B2 (COX6B2) (Bos taurus (Bovine)).